The primary structure comprises 62 residues: Large ribosomal subunit protein bL28 (62 aa).

It belongs to the bacterial ribosomal protein bL28 family.

This is Large ribosomal subunit protein bL28 from Aliarcobacter butzleri (strain RM4018) (Arcobacter butzleri).